Consider the following 632-residue polypeptide: Biosynthetic arginine decarboxylase (632 aa).

N6-(pyridoxal phosphate)lysine is present on K101. 281 to 291 lines the substrate pocket; the sequence is FDVGGGLGVDY.

This sequence belongs to the Orn/Lys/Arg decarboxylase class-II family. SpeA subfamily. It depends on Mg(2+) as a cofactor. Pyridoxal 5'-phosphate is required as a cofactor.

It catalyses the reaction L-arginine + H(+) = agmatine + CO2. It functions in the pathway amine and polyamine biosynthesis; agmatine biosynthesis; agmatine from L-arginine: step 1/1. Catalyzes the biosynthesis of agmatine from arginine. The chain is Biosynthetic arginine decarboxylase from Salmonella agona (strain SL483).